Here is a 201-residue protein sequence, read N- to C-terminus: ADP-ribosylation factor-like protein 4D (201 aa).

G2 carries the N-myristoyl glycine lipid modification. Residues 28–35, 76–80, and 135–138 contribute to the GTP site; these read GLDSAGKT, DVGGQ, and NKQD.

The protein belongs to the small GTPase superfamily. Arf family. In terms of assembly, interacts with CYTH2; the interaction is direct and ARL4D GTP-dependent. Does not interact with ARL4D.

It localises to the nucleus. Its subcellular location is the nucleolus. The protein localises to the cell membrane. It is found in the cytoplasm. Its function is as follows. Small GTP-binding protein which cycles between an inactive GDP-bound and an active GTP-bound form, and the rate of cycling is regulated by guanine nucleotide exchange factors (GEF) and GTPase-activating proteins (GAP). GTP-binding protein that does not act as an allosteric activator of the cholera toxin catalytic subunit. Recruits CYTH1, CYTH2, CYTH3 and CYTH4 to the plasma membrane in GDP-bound form. In Homo sapiens (Human), this protein is ADP-ribosylation factor-like protein 4D (ARL4D).